Consider the following 88-residue polypeptide: Mini zinc finger protein 3 (88 aa).

The ZF-HD dimerization-type; degenerate zinc-finger motif lies at 26-72 (YVECQKNHAANIGGYAVDGCREFMASGGDDALTCAACGCHRNFHRRE).

Homo- and heterodimers. Interacts with ZHD3, ZHD5, ZHD6, ZHD7, ZHD8, ZHD9, ZHD10 and ZHD13. As to expression, mostly expressed in roots, stems and flowers, present in seedlings and leaves, and weakly observed in inflorescence and siliques.

It localises to the cytoplasm. Functionally, inhibits zinc finger homeodomain (ZHD) transcription factors by interacting with them to prevent both their nuclear localization and their DNA-binding properties. Involved in integrating signals from multiple hormones by regulating the expression of specific genes. Promotes the formation of ectopic shoot meristems on leaf margins. In Arabidopsis thaliana (Mouse-ear cress), this protein is Mini zinc finger protein 3 (MIF3).